Consider the following 85-residue polypeptide: Sugar transporter SemiSWEET (85 aa).

The 58-residue stretch at 2-59 folds into the PQ-loop domain; it reads ENLIGYVAAFLTTVSFLPQVLRVVMTKQTRDISRNMYIMFFLGVVLWFVYGILRSDLP. 3 helical membrane-spanning segments follow: residues 5-25, 33-53, and 57-77; these read IGYVAAFLTTVSFLPQVLRVV, ISRNMYIMFFLGVVLWFVYGI, and DLPIILANVVTLFFVTIILYY.

In terms of assembly, homodimer.

Its subcellular location is the cell membrane. The homodimer mediates transmembrane sugar transport down a concentration gradient. Transport is probably effected by rocking-type movements, where a cargo-binding cavity opens first on one and then on the other side of the membrane. The chain is Sugar transporter SemiSWEET from Leptospira biflexa serovar Patoc (strain Patoc 1 / ATCC 23582 / Paris).